The chain runs to 150 residues: Large ribosomal subunit protein bL9 (150 aa).

The protein belongs to the bacterial ribosomal protein bL9 family.

Functionally, binds to the 23S rRNA. The polypeptide is Large ribosomal subunit protein bL9 (Verminephrobacter eiseniae (strain EF01-2)).